Reading from the N-terminus, the 568-residue chain is Envelope glycoprotein E (568 aa).

An N-terminal signal peptide occupies residues 1–20 (MMPATLAGLALAVTVATMFA). Residues 21–422 (QRVDSTTIHH…GGGPGNSKRR (402 aa)) lie on the Virion surface side of the membrane. N-linked (GlcNAc...) asparagine; by host glycans are attached at residues Asn-88, Asn-179, and Asn-248. Cys-271 and Cys-280 are joined by a disulfide. The helical transmembrane segment at 423-443 (AAVLGAAVWIALTLLILGGLG) threads the bilayer. At 444-568 (AYVAVNKKCL…ANKTFPSQRY (125 aa)) the chain is on the intravirion side. Residues 465–468 (KPTL) carry the Internalization motif motif. The tract at residues 470-534 (THAHTYTSLP…SRRNSFGPTL (65 aa)) is disordered. The interval 482-497 (GDLSLEQDAEDEDEDE) is acidic. Positions 486–500 (LEQDAEDEDEDEEEL) are enriched in acidic residues. A compositionally biased stretch (basic residues) spans 515–526 (KSSRSPSRRSSR).

The protein belongs to the alphaherpesvirinae glycoprotein E family. In terms of assembly, interacts with gI. Phosphorylated on serines within the acidic cluster. Phosphorylation determines whether endocytosed viral gE traffics to the trans-Golgi network or recycles to the cell membrane.

It is found in the virion membrane. Its subcellular location is the host cell membrane. The protein localises to the host cell junction. The protein resides in the host Golgi apparatus membrane. It localises to the host endosome membrane. In epithelial cells, the heterodimer gE/gI is required for the cell-to-cell spread of the virus, by sorting nascent virions to cell junctions. Once the virus reaches the cell junctions, virus particles can spread to adjacent cells extremely rapidly through interactions with cellular receptors that accumulate at these junctions. Implicated in basolateral spread in polarized cells. In neuronal cells, gE/gI is essential for the anterograde spread of the infection throughout the host nervous system. Together with US9, the heterodimer gE/gI is involved in the sorting and transport of viral structural components toward axon tips. The polypeptide is Envelope glycoprotein E (US8) (Psittacid herpesvirus 1 (isolate Amazon parrot/-/97-0001/1997) (PsHV-1)).